We begin with the raw amino-acid sequence, 240 residues long: Ribonuclease P protein component (240 aa).

The segment at 1-140 (MDEKDLATQQ…KKAGGKGLVS (140 aa)) is disordered. Residues 40 to 51 (APPPHRVIPPHP) show a composition bias toward pro residues. Residues 47–123 (IPPHPGLRQD…PGPDRDGGSK (77 aa)) form an insert region. The segment covering 122–132 (SKASRASSPKK) has biased composition (low complexity).

The protein belongs to the RnpA family. As to quaternary structure, consists of a catalytic RNA component (M1 or rnpB) and a protein subunit.

It catalyses the reaction Endonucleolytic cleavage of RNA, removing 5'-extranucleotides from tRNA precursor.. Functionally, RNaseP catalyzes the removal of the 5'-leader sequence from pre-tRNA to produce the mature 5'-terminus. It can also cleave other RNA substrates such as 4.5S RNA. The protein component plays an auxiliary but essential role in vivo by binding to the 5'-leader sequence and broadening the substrate specificity of the ribozyme. This is Ribonuclease P protein component from Thermus filiformis.